Reading from the N-terminus, the 118-residue chain is Basic phospholipase A2 CM-III (118 aa).

Cystine bridges form between Cys-11-Cys-70, Cys-26-Cys-117, Cys-28-Cys-44, Cys-43-Cys-98, Cys-50-Cys-91, Cys-59-Cys-84, and Cys-77-Cys-89. 3 residues coordinate Ca(2+): Tyr-27, Gly-29, and Gly-31. His-47 is a catalytic residue. Asp-48 contacts Ca(2+). Residues 52–69 carry the Coagulation factor Xa binding motif motif; sequence EKAGKMGCWPYFTLYKYK. Asp-92 is a catalytic residue.

It belongs to the phospholipase A2 family. Group I subfamily. D49 sub-subfamily. Requires Ca(2+) as cofactor. In terms of tissue distribution, expressed by the venom gland.

Its subcellular location is the secreted. It carries out the reaction a 1,2-diacyl-sn-glycero-3-phosphocholine + H2O = a 1-acyl-sn-glycero-3-phosphocholine + a fatty acid + H(+). In terms of biological role, snake venom phospholipase A2 (PLA2) that shows several activities. It shows strong anticoagulant activity, probably by binding to coagulation factor Xa (F10) and inhibiting the formation of the prothrombinase complex, shows direct hemolytic action, causes neuromuscular blockade with a gradual contracture and a decreased sensitivity to ACh and KCl, abolishes twitches evoked by indirect stimulation earlier than those by direct stimulation (in the mouse phrenic nerve-diaphragm preparation), and causes myonecrosis when injected intramuscularly. PLA2 catalyzes the calcium-dependent hydrolysis of the 2-acyl groups in 3-sn-phosphoglycerides. This Naja mossambica (Mozambique spitting cobra) protein is Basic phospholipase A2 CM-III.